A 210-amino-acid chain; its full sequence is 7-carboxy-7-deazaguanine synthase (210 aa).

Substrate contacts are provided by residues 25 to 27 (IQG) and R40. The region spanning 31-210 (HTGTAAYFIR…LQTHKYLNIP (180 aa)) is the Radical SAM core domain. Residues C44, C48, and C51 each contribute to the [4Fe-4S] cluster site. T84 is a substrate binding site. S-adenosyl-L-methionine-binding positions include G86 and 127–129 (SPK). P210 lines the substrate pocket.

The protein belongs to the radical SAM superfamily. 7-carboxy-7-deazaguanine synthase family. As to quaternary structure, homodimer. Requires [4Fe-4S] cluster as cofactor. S-adenosyl-L-methionine serves as cofactor. The cofactor is Mg(2+).

The enzyme catalyses 6-carboxy-5,6,7,8-tetrahydropterin + H(+) = 7-carboxy-7-deazaguanine + NH4(+). It functions in the pathway purine metabolism; 7-cyano-7-deazaguanine biosynthesis. Its function is as follows. Catalyzes the complex heterocyclic radical-mediated conversion of 6-carboxy-5,6,7,8-tetrahydropterin (CPH4) to 7-carboxy-7-deazaguanine (CDG), a step common to the biosynthetic pathways of all 7-deazapurine-containing compounds. This Flavobacterium psychrophilum (strain ATCC 49511 / DSM 21280 / CIP 103535 / JIP02/86) protein is 7-carboxy-7-deazaguanine synthase.